The primary structure comprises 135 residues: MAKIVRFGVSIEEDLLENFDKIIEDKGYNSRSEAIRDLIRDYIIKEKWNLKKEKVAGSISLIYEHDVYGLSEKLTDIQHHYHDVIISTLHVHLDEKNCMEVILVRGKVEKIKRLYDELSSLKWVRHTNIAITDII.

Ni(2+) contacts are provided by histidine 79, histidine 90, histidine 92, and cysteine 98.

The protein belongs to the transcriptional regulatory CopG/NikR family. It depends on Ni(2+) as a cofactor.

Its function is as follows. Transcriptional regulator. The chain is Putative nickel-responsive regulator from Dictyoglomus turgidum (strain DSM 6724 / Z-1310).